The chain runs to 800 residues: Elongation factor G, mitochondrial (800 aa).

The transit peptide at 1–59 directs the protein to the mitochondrion; it reads MRVIRAVATLHAGRAAAVRQGVRSVSLGACRAAVETPSLRSAGSQFESRRLFSRSSYLR. The region spanning 99–385 is the tr-type G domain; it reads ARVRNIGIAA…AVCDYLPNPN (287 aa). GTP-binding positions include 108-115, 183-187, and 237-240; these read AHIDSGKT, DTPGH, and NKMD.

It belongs to the TRAFAC class translation factor GTPase superfamily. Classic translation factor GTPase family. EF-G/EF-2 subfamily.

It is found in the mitochondrion. It participates in protein biosynthesis; polypeptide chain elongation. Mitochondrial GTPase that catalyzes the GTP-dependent ribosomal translocation step during translation elongation. During this step, the ribosome changes from the pre-translocational (PRE) to the post-translocational (POST) state as the newly formed A-site-bound peptidyl-tRNA and P-site-bound deacylated tRNA move to the P and E sites, respectively. Catalyzes the coordinated movement of the two tRNA molecules, the mRNA and conformational changes in the ribosome. The sequence is that of Elongation factor G, mitochondrial (mef1) from Neurospora crassa (strain ATCC 24698 / 74-OR23-1A / CBS 708.71 / DSM 1257 / FGSC 987).